The chain runs to 83 residues: MNFLIFIAVASSLALGALCKKEGYPYDGNNCRYICFRNQYCDDLCKKLKGESGYCYGWNQSCYCYGLPDTEKTKPDKRCHSKG.

A signal peptide spans 1-19 (MNFLIFIAVASSLALGALC). Residues 21-80 (KEGYPYDGNNCRYICFRNQYCDDLCKKLKGESGYCYGWNQSCYCYGLPDTEKTKPDKRCH) enclose the LCN-type CS-alpha/beta domain. Cystine bridges form between Cys-31-Cys-79, Cys-35-Cys-55, Cys-41-Cys-62, and Cys-45-Cys-64.

This sequence belongs to the long (4 C-C) scorpion toxin superfamily. Sodium channel inhibitor family. Alpha subfamily. Expressed by the venom gland.

Its subcellular location is the secreted. Functionally, binds voltage-independently at site-3 of voltage-gated sodium channels (Nav) and inhibits the inactivation of the activated channels, thereby blocking neuronal transmission. The polypeptide is Neurotoxin LmNaTx10 (Lychas mucronatus (Chinese swimming scorpion)).